Reading from the N-terminus, the 404-residue chain is uncharacterized protein (404 aa).

The next 12 helical transmembrane spans lie at 16 to 36, 49 to 69, 79 to 99, 110 to 130, 133 to 153, 166 to 186, 221 to 241, 252 to 272, 283 to 303, 307 to 327, 342 to 362, and 364 to 384; these read FAFF…QPLM, AASL…LVFG, PIMG…AFSP, IQGV…GEEI, GSLG…AVFG, WHMA…IFFI, FLIG…IVYV, AFSS…SFIG, ILVM…NNML, ILGI…ASSW, LYLF…GLFW, and GFHW…ALWL.

This sequence belongs to the major facilitator superfamily.

Its subcellular location is the cell membrane. This is an uncharacterized protein from Bacillus subtilis (strain 168).